The primary structure comprises 206 residues: Small ribosomal subunit protein uS4 (206 aa).

The region spanning 93-153 (TRLDALVLRA…PKSQTMVPFQ (61 aa)) is the S4 RNA-binding domain.

This sequence belongs to the universal ribosomal protein uS4 family. In terms of assembly, part of the 30S ribosomal subunit. Contacts protein S5. The interaction surface between S4 and S5 is involved in control of translational fidelity.

Its function is as follows. One of the primary rRNA binding proteins, it binds directly to 16S rRNA where it nucleates assembly of the body of the 30S subunit. In terms of biological role, with S5 and S12 plays an important role in translational accuracy. This chain is Small ribosomal subunit protein uS4, found in Bifidobacterium animalis subsp. lactis (strain AD011).